The primary structure comprises 339 residues: N-acetyl-gamma-glutamyl-phosphate reductase 1 (339 aa).

The active site involves Cys149.

The protein belongs to the NAGSA dehydrogenase family. Type 1 subfamily.

The protein localises to the cytoplasm. The catalysed reaction is N-acetyl-L-glutamate 5-semialdehyde + phosphate + NADP(+) = N-acetyl-L-glutamyl 5-phosphate + NADPH + H(+). Its pathway is amino-acid biosynthesis; L-arginine biosynthesis; N(2)-acetyl-L-ornithine from L-glutamate: step 3/4. Catalyzes the NADPH-dependent reduction of N-acetyl-5-glutamyl phosphate to yield N-acetyl-L-glutamate 5-semialdehyde. In Lactiplantibacillus plantarum (strain ATCC BAA-793 / NCIMB 8826 / WCFS1) (Lactobacillus plantarum), this protein is N-acetyl-gamma-glutamyl-phosphate reductase 1.